The following is a 688-amino-acid chain: Polyribonucleotide nucleotidyltransferase (688 aa).

Positions 484 and 490 each coordinate Mg(2+). Residues 550 to 609 (PTTEIFNVAPDKIVEIIGQGGRVIKEIVEKFEVKIDLNKPSGEVKIMGNKERVLKTKEFI) form the KH domain. Positions 626–688 (DEVLEAQVKR…NKGKIALDLA (63 aa)) constitute an S1 motif domain.

This sequence belongs to the polyribonucleotide nucleotidyltransferase family. Requires Mg(2+) as cofactor.

It localises to the cytoplasm. The catalysed reaction is RNA(n+1) + phosphate = RNA(n) + a ribonucleoside 5'-diphosphate. In terms of biological role, involved in mRNA degradation. Catalyzes the phosphorolysis of single-stranded polyribonucleotides processively in the 3'- to 5'-direction. In Helicobacter pylori (strain HPAG1), this protein is Polyribonucleotide nucleotidyltransferase.